The chain runs to 642 residues: Glutamyl-tRNA(Gln) amidotransferase subunit E (642 aa).

This sequence belongs to the GatB/GatE family. GatE subfamily. Heterodimer of GatD and GatE.

The enzyme catalyses L-glutamyl-tRNA(Gln) + L-glutamine + ATP + H2O = L-glutaminyl-tRNA(Gln) + L-glutamate + ADP + phosphate + H(+). In terms of biological role, allows the formation of correctly charged Gln-tRNA(Gln) through the transamidation of misacylated Glu-tRNA(Gln) in organisms which lack glutaminyl-tRNA synthetase. The reaction takes place in the presence of glutamine and ATP through an activated gamma-phospho-Glu-tRNA(Gln). The GatDE system is specific for glutamate and does not act on aspartate. The sequence is that of Glutamyl-tRNA(Gln) amidotransferase subunit E from Aeropyrum pernix (strain ATCC 700893 / DSM 11879 / JCM 9820 / NBRC 100138 / K1).